Reading from the N-terminus, the 549-residue chain is Hydroxylamine reductase (549 aa).

Residues cysteine 5, cysteine 8, cysteine 17, and cysteine 23 each contribute to the [4Fe-4S] cluster site. Hybrid [4Fe-2O-2S] cluster contacts are provided by histidine 244, glutamate 268, cysteine 312, cysteine 403, cysteine 431, cysteine 456, glutamate 491, and lysine 493. Position 403 is a cysteine persulfide (cysteine 403).

Belongs to the HCP family. The cofactor is [4Fe-4S] cluster. Requires hybrid [4Fe-2O-2S] cluster as cofactor.

It localises to the cytoplasm. It catalyses the reaction A + NH4(+) + H2O = hydroxylamine + AH2 + H(+). Its function is as follows. Catalyzes the reduction of hydroxylamine to form NH(3) and H(2)O. In Caldanaerobacter subterraneus subsp. tengcongensis (strain DSM 15242 / JCM 11007 / NBRC 100824 / MB4) (Thermoanaerobacter tengcongensis), this protein is Hydroxylamine reductase.